The following is a 373-amino-acid chain: DNA replication and repair protein RecF (373 aa).

30-37 is a binding site for ATP; sequence GDNAQGKT.

It belongs to the RecF family.

Its subcellular location is the cytoplasm. Its function is as follows. The RecF protein is involved in DNA metabolism; it is required for DNA replication and normal SOS inducibility. RecF binds preferentially to single-stranded, linear DNA. It also seems to bind ATP. In Oenococcus oeni (strain ATCC BAA-331 / PSU-1), this protein is DNA replication and repair protein RecF.